The following is a 383-amino-acid chain: Succinate--CoA ligase [ADP-forming] subunit beta 2 (383 aa).

Residues 9–231 (RELFKEHGIV…QEDADSLEAR (223 aa)) enclose the ATP-grasp domain. ATP contacts are provided by residues K45, 52-54 (GRG), C94, and E99. Mg(2+) contacts are provided by N187 and D201. Residues N251 and 308 to 310 (GIT) each bind substrate.

The protein belongs to the succinate/malate CoA ligase beta subunit family. Heterotetramer of two alpha and two beta subunits. The cofactor is Mg(2+).

It carries out the reaction succinate + ATP + CoA = succinyl-CoA + ADP + phosphate. The enzyme catalyses GTP + succinate + CoA = succinyl-CoA + GDP + phosphate. Its pathway is carbohydrate metabolism; tricarboxylic acid cycle; succinate from succinyl-CoA (ligase route): step 1/1. Succinyl-CoA synthetase functions in the citric acid cycle (TCA), coupling the hydrolysis of succinyl-CoA to the synthesis of either ATP or GTP and thus represents the only step of substrate-level phosphorylation in the TCA. The beta subunit provides nucleotide specificity of the enzyme and binds the substrate succinate, while the binding sites for coenzyme A and phosphate are found in the alpha subunit. In Streptomyces coelicolor (strain ATCC BAA-471 / A3(2) / M145), this protein is Succinate--CoA ligase [ADP-forming] subunit beta 2.